Consider the following 477-residue polypeptide: Ankyrin repeat, SAM and basic leucine zipper domain-containing protein 1 (477 aa).

Residues Ser-17, Ser-18, and Ser-20 each carry the phosphoserine modification. ANK repeat units follow at residues 46 to 76 (EKKE…SVDA), 80 to 109 (YGWT…NASF), 112 to 146 (DKQT…DPNV), 150 to 179 (RLMT…EVNT), 183 to 212 (NGYT…NKML), and 216 to 245 (DGKL…PLEG). An SAM domain is found at 274-336 (SYAAFGDLEV…KILTALKELE (63 aa)).

Interacts with DDX4, PIWIL1, RANBP9 and TDRD1.

It is found in the cytoplasm. Plays a central role during spermatogenesis by repressing transposable elements and preventing their mobilization, which is essential for the germline integrity. Acts via the piRNA metabolic process, which mediates the repression of transposable elements during meiosis by forming complexes composed of piRNAs and Piwi proteins and governs the methylation and subsequent repression of transposons. Its association with pi-bodies suggests a participation in the primary piRNAs metabolic process. Required prior to the pachytene stage to facilitate the production of multiple types of piRNAs, including those associated with repeats involved in the regulation of retrotransposons. May act by mediating protein-protein interactions during germ cell maturation. The sequence is that of Ankyrin repeat, SAM and basic leucine zipper domain-containing protein 1 (ASZ1) from Ateles geoffroyi (Black-handed spider monkey).